The following is a 291-amino-acid chain: tRNA dimethylallyltransferase (291 aa).

9-16 (GTTASGKS) serves as a coordination point for ATP. Substrate is bound at residue 11–16 (TASGKS). Residues 34–37 (DSLA) form an interaction with substrate tRNA region.

This sequence belongs to the IPP transferase family. In terms of assembly, monomer. Mg(2+) is required as a cofactor.

The catalysed reaction is adenosine(37) in tRNA + dimethylallyl diphosphate = N(6)-dimethylallyladenosine(37) in tRNA + diphosphate. In terms of biological role, catalyzes the transfer of a dimethylallyl group onto the adenine at position 37 in tRNAs that read codons beginning with uridine, leading to the formation of N6-(dimethylallyl)adenosine (i(6)A). The polypeptide is tRNA dimethylallyltransferase (Campylobacter concisus (strain 13826)).